The sequence spans 159 residues: Ribosomal RNA large subunit methyltransferase H (159 aa).

S-adenosyl-L-methionine is bound by residues Leu76, Gly108, and 127–132 (FSPMTF).

This sequence belongs to the RNA methyltransferase RlmH family. As to quaternary structure, homodimer.

The protein resides in the cytoplasm. The enzyme catalyses pseudouridine(1915) in 23S rRNA + S-adenosyl-L-methionine = N(3)-methylpseudouridine(1915) in 23S rRNA + S-adenosyl-L-homocysteine + H(+). Its function is as follows. Specifically methylates the pseudouridine at position 1915 (m3Psi1915) in 23S rRNA. The chain is Ribosomal RNA large subunit methyltransferase H from Alkaliphilus oremlandii (strain OhILAs) (Clostridium oremlandii (strain OhILAs)).